A 194-amino-acid polypeptide reads, in one-letter code: Peptidyl-tRNA hydrolase (194 aa).

Tyrosine 17 serves as a coordination point for tRNA. Histidine 22 (proton acceptor) is an active-site residue. TRNA contacts are provided by tyrosine 68, asparagine 70, and asparagine 116.

This sequence belongs to the PTH family. Monomer.

Its subcellular location is the cytoplasm. The catalysed reaction is an N-acyl-L-alpha-aminoacyl-tRNA + H2O = an N-acyl-L-amino acid + a tRNA + H(+). Hydrolyzes ribosome-free peptidyl-tRNAs (with 1 or more amino acids incorporated), which drop off the ribosome during protein synthesis, or as a result of ribosome stalling. Functionally, catalyzes the release of premature peptidyl moieties from peptidyl-tRNA molecules trapped in stalled 50S ribosomal subunits, and thus maintains levels of free tRNAs and 50S ribosomes. The protein is Peptidyl-tRNA hydrolase of Pseudomonas fluorescens (strain ATCC BAA-477 / NRRL B-23932 / Pf-5).